A 456-amino-acid polypeptide reads, in one-letter code: Probable glycine dehydrogenase (decarboxylating) subunit 1 (456 aa).

The protein belongs to the GcvP family. N-terminal subunit subfamily. As to quaternary structure, the glycine cleavage system is composed of four proteins: P, T, L and H. In this organism, the P 'protein' is a heterodimer of two subunits.

The catalysed reaction is N(6)-[(R)-lipoyl]-L-lysyl-[glycine-cleavage complex H protein] + glycine + H(+) = N(6)-[(R)-S(8)-aminomethyldihydrolipoyl]-L-lysyl-[glycine-cleavage complex H protein] + CO2. The glycine cleavage system catalyzes the degradation of glycine. The P protein binds the alpha-amino group of glycine through its pyridoxal phosphate cofactor; CO(2) is released and the remaining methylamine moiety is then transferred to the lipoamide cofactor of the H protein. The sequence is that of Probable glycine dehydrogenase (decarboxylating) subunit 1 from Legionella pneumophila (strain Lens).